The chain runs to 394 residues: Elongation factor Tu 1 (394 aa).

The tr-type G domain occupies 10 to 204 (KPHVNVGTIG…ALDSYIPQPE (195 aa)). The tract at residues 19–26 (GHVDHGKT) is G1. 19–26 (GHVDHGKT) provides a ligand contact to GTP. Threonine 26 lines the Mg(2+) pocket. Residues 60–64 (GITIN) form a G2 region. A G3 region spans residues 81–84 (DCPG). GTP contacts are provided by residues 81–85 (DCPGH) and 136–139 (NKCD). Residues 136 to 139 (NKCD) are G4. Positions 174–176 (SAL) are G5.

The protein belongs to the TRAFAC class translation factor GTPase superfamily. Classic translation factor GTPase family. EF-Tu/EF-1A subfamily. In terms of assembly, monomer.

The protein localises to the cytoplasm. It catalyses the reaction GTP + H2O = GDP + phosphate + H(+). GTP hydrolase that promotes the GTP-dependent binding of aminoacyl-tRNA to the A-site of ribosomes during protein biosynthesis. In Yersinia pestis bv. Antiqua (strain Nepal516), this protein is Elongation factor Tu 1.